The primary structure comprises 241 residues: Triosephosphate isomerase (241 aa).

Residue 9–11 coordinates substrate; it reads NWK. The active-site Electrophile is His96. Glu165 serves as the catalytic Proton acceptor. Substrate-binding positions include Gly171, Ser204, and 225–226; that span reads GG.

Belongs to the triosephosphate isomerase family. Homodimer.

The protein resides in the cytoplasm. The catalysed reaction is D-glyceraldehyde 3-phosphate = dihydroxyacetone phosphate. Its pathway is carbohydrate biosynthesis; gluconeogenesis. It functions in the pathway carbohydrate degradation; glycolysis; D-glyceraldehyde 3-phosphate from glycerone phosphate: step 1/1. In terms of biological role, involved in the gluconeogenesis. Catalyzes stereospecifically the conversion of dihydroxyacetone phosphate (DHAP) to D-glyceraldehyde-3-phosphate (G3P). This Prochlorococcus marinus (strain MIT 9515) protein is Triosephosphate isomerase.